Consider the following 365-residue polypeptide: GDSL lipase (365 aa).

The N-terminal stretch at 1–27 (MAVASRKLGALVLVAVLCLSLPTGCLS) is a signal peptide. Ser40 acts as the Nucleophile in catalysis. 2 N-linked (GlcNAc...) asparagine glycosylation sites follow: Asn189 and Asn310. Residues Asp318 and His321 each act as charge relay system in the active site.

This sequence belongs to the 'GDSL' lipolytic enzyme family. Restricted to the pericarp during achene maturation. Expressed in the leaves of mature plants and seedlings, as well as in buds and flowers. Present in disk florets.

The protein resides in the secreted. It is found in the extracellular space. It catalyses the reaction (Z,S)-pyrethrolone + (1R,3R)-chrysanthemoyl-CoA = pyrethrin I + CoA. It carries out the reaction (Z,S)-pyrethrolone + (1R,3R)-pyrethroyl-CoA = pyrethrin II + CoA. The catalysed reaction is (Z,S)-jasmololone + (1R,3R)-chrysanthemoyl-CoA = jasmolin I + CoA. The enzyme catalyses (Z,S)-cinerolone + (1R,3R)-chrysanthemoyl-CoA = cinerin I + CoA. It catalyses the reaction (Z,S)-jasmololone + (1R,3R)-pyrethroyl-CoA = jasmolin II + CoA. It carries out the reaction (Z,S)-cinerolone + (1R,3R)-pyrethroyl-CoA = cinerin II + CoA. The protein operates within isoprenoid biosynthesis. In terms of biological role, component of the monoterpenoid pyrethrins biosynthesis; pyrethrins are widely used plant-derived pesticide. Acyltransferase that catalyzes the esterification of terpene acids and lipid alcohol substrates into pyrethrins; mediates the transfer of a chrysanthemoyl moiety from the coenzyme A (CoA) thio-ester chrysanthemoyl CoA to pyrethrolone, and, to a lower extent, to jasmololone and cinerolone thus producing pyrethrins (e.g. pyrethrin type I). Can also use pyrethroyl CoA as substrate. Also has esterase activity, being able to cleave the ester bond of pyrethrin I, p-nitrophenyl butanoate and p-nitrophenyl octanoate to produce pyrethrolone and p-nitrophenol, respectively. This Tanacetum cinerariifolium (Dalmatian daisy) protein is GDSL lipase.